A 342-amino-acid chain; its full sequence is N-acetyl-gamma-glutamyl-phosphate reductase (342 aa).

Residue Cys-147 is part of the active site.

It belongs to the NAGSA dehydrogenase family. Type 1 subfamily.

It localises to the cytoplasm. It catalyses the reaction N-acetyl-L-glutamate 5-semialdehyde + phosphate + NADP(+) = N-acetyl-L-glutamyl 5-phosphate + NADPH + H(+). It functions in the pathway amino-acid biosynthesis; L-arginine biosynthesis; N(2)-acetyl-L-ornithine from L-glutamate: step 3/4. Catalyzes the NADPH-dependent reduction of N-acetyl-5-glutamyl phosphate to yield N-acetyl-L-glutamate 5-semialdehyde. In Campylobacter jejuni subsp. doylei (strain ATCC BAA-1458 / RM4099 / 269.97), this protein is N-acetyl-gamma-glutamyl-phosphate reductase.